A 914-amino-acid chain; its full sequence is Golgin candidate 6 (914 aa).

Coiled-coil stretches lie at residues 723 to 837 and 863 to 901; these read IEKQ…SLKG and EDELNDLLVCLGQEESKVEKLSAKLIELGVDVDKLLEDI. Serine 911 carries the phosphoserine modification.

The protein localises to the golgi apparatus. Its subcellular location is the golgi stack. Functionally, golgi matrix protein playing a role in tethering of vesicles to Golgi membranes and in maintaining the overall structure of the Golgi apparatus. Functions in the anterograde transport of storage protein precursors from the endoplasmic reticulum (ER) to the Golgi complex. This is Golgin candidate 6 (GC6) from Arabidopsis thaliana (Mouse-ear cress).